We begin with the raw amino-acid sequence, 549 residues long: Membrane protein insertase YidC (549 aa).

The chain crosses the membrane as a helical span at residues 6–26 (NLLLIGLLLVSFMLWQSWMVD). The segment at 35–55 (ATAESSVPASSGGDVPNQNDA) is disordered. 4 helical membrane-spanning segments follow: residues 349 to 369 (QFLHGLVGNWGVAIILITMIV), 424 to 444 (LGGCFPLLIQMPIFIALYWTL), 462 to 482 (LSVKDPYYVLPLLMGATMWYI), and 503 to 523 (PIVFTFMFLWFPSGLTLYWVV).

This sequence belongs to the OXA1/ALB3/YidC family. Type 1 subfamily. As to quaternary structure, interacts with the Sec translocase complex via SecD. Specifically interacts with transmembrane segments of nascent integral membrane proteins during membrane integration.

Its subcellular location is the cell inner membrane. In terms of biological role, required for the insertion and/or proper folding and/or complex formation of integral membrane proteins into the membrane. Involved in integration of membrane proteins that insert both dependently and independently of the Sec translocase complex, as well as at least some lipoproteins. Aids folding of multispanning membrane proteins. The protein is Membrane protein insertase YidC of Tolumonas auensis (strain DSM 9187 / NBRC 110442 / TA 4).